Consider the following 314-residue polypeptide: DNA-directed RNA polymerase subunit alpha (314 aa).

Positions 1-228 (MIEIEKPRIE…EHLNIFVGLT (228 aa)) are alpha N-terminal domain (alpha-NTD). Residues 245-314 (KEKVLEMSIE…DLGLGLRKED (70 aa)) are alpha C-terminal domain (alpha-CTD).

Belongs to the RNA polymerase alpha chain family. Homodimer. The RNAP catalytic core consists of 2 alpha, 1 beta, 1 beta' and 1 omega subunit. When a sigma factor is associated with the core the holoenzyme is formed, which can initiate transcription.

It catalyses the reaction RNA(n) + a ribonucleoside 5'-triphosphate = RNA(n+1) + diphosphate. In terms of biological role, DNA-dependent RNA polymerase catalyzes the transcription of DNA into RNA using the four ribonucleoside triphosphates as substrates. This chain is DNA-directed RNA polymerase subunit alpha, found in Staphylococcus saprophyticus subsp. saprophyticus (strain ATCC 15305 / DSM 20229 / NCIMB 8711 / NCTC 7292 / S-41).